Here is a 242-residue protein sequence, read N- to C-terminus: Type III pantothenate kinase (242 aa).

7-14 (DNSNTRTK) lines the ATP pocket. Residues Y88 and 95 to 98 (GADR) contribute to the substrate site. The Proton acceptor role is filled by D97. D117 contributes to the K(+) binding site. T120 is a binding site for ATP. Residue T172 participates in substrate binding.

This sequence belongs to the type III pantothenate kinase family. As to quaternary structure, homodimer. NH4(+) is required as a cofactor. Requires K(+) as cofactor.

The protein resides in the cytoplasm. It carries out the reaction (R)-pantothenate + ATP = (R)-4'-phosphopantothenate + ADP + H(+). Its pathway is cofactor biosynthesis; coenzyme A biosynthesis; CoA from (R)-pantothenate: step 1/5. Its function is as follows. Catalyzes the phosphorylation of pantothenate (Pan), the first step in CoA biosynthesis. This is Type III pantothenate kinase from Akkermansia muciniphila (strain ATCC BAA-835 / DSM 22959 / JCM 33894 / BCRC 81048 / CCUG 64013 / CIP 107961 / Muc).